The chain runs to 439 residues: Homogentisate 1,2-dioxygenase (439 aa).

The Proton acceptor role is filled by His-293. Residues His-336 and Glu-342 each coordinate Fe cation. Homogentisate-binding residues include Tyr-351 and His-372. His-372 serves as a coordination point for Fe cation.

Belongs to the homogentisate dioxygenase family. Hexamer; dimer of trimers. It depends on Fe cation as a cofactor.

It carries out the reaction homogentisate + O2 = 4-maleylacetoacetate + H(+). It functions in the pathway amino-acid degradation; L-phenylalanine degradation; acetoacetate and fumarate from L-phenylalanine: step 4/6. Its function is as follows. Involved in the catabolism of homogentisate (2,5-dihydroxyphenylacetate or 2,5-OH-PhAc), a central intermediate in the degradation of phenylalanine and tyrosine. Catalyzes the oxidative ring cleavage of the aromatic ring of homogentisate to yield maleylacetoacetate. In Cupriavidus pinatubonensis (strain JMP 134 / LMG 1197) (Cupriavidus necator (strain JMP 134)), this protein is Homogentisate 1,2-dioxygenase.